The following is a 211-amino-acid chain: Small ribosomal subunit protein bS6c alpha (211 aa).

Over residues 1–19 (MATFSLTSTLPSSSPTTSL) the composition is skewed to low complexity. Disordered regions lie at residues 1 to 25 (MATF…IPKP) and 80 to 100 (DEDP…PEPQ). The transit peptide at 1 to 65 (MATFSLTSTL…YGPYVKAIAL (65 aa)) directs the protein to the chloroplast.

The protein belongs to the bacterial ribosomal protein bS6 family. Component of the chloroplast small ribosomal subunit (SSU). Mature 70S chloroplast ribosomes of higher plants consist of a small (30S) and a large (50S) subunit. The 30S small subunit contains 1 molecule of ribosomal RNA (16S rRNA) and 24 different proteins. The 50S large subunit contains 3 rRNA molecules (23S, 5S and 4.5S rRNA) and 33 different proteins.

The protein localises to the plastid. It localises to the chloroplast. Component of the chloroplast ribosome (chloro-ribosome), a dedicated translation machinery responsible for the synthesis of chloroplast genome-encoded proteins, including proteins of the transcription and translation machinery and components of the photosynthetic apparatus. The sequence is that of Small ribosomal subunit protein bS6c alpha (RPS6) from Spinacia oleracea (Spinach).